The chain runs to 357 residues: Peptide chain release factor 1 (357 aa).

Gln-233 bears the N5-methylglutamine mark.

Belongs to the prokaryotic/mitochondrial release factor family. Post-translationally, methylated by PrmC. Methylation increases the termination efficiency of RF1.

The protein resides in the cytoplasm. Its function is as follows. Peptide chain release factor 1 directs the termination of translation in response to the peptide chain termination codons UAG and UAA. The chain is Peptide chain release factor 1 from Syntrophus aciditrophicus (strain SB).